The sequence spans 257 residues: Global transcriptional regulator CodY (257 aa).

The interval 1–155 (MSLLSKTREL…AATVIGMEIL (155 aa)) is GAF domain. The segment at residues 203 to 222 (ASKVADRVGITRSVIVNALR) is a DNA-binding region (H-T-H motif).

This sequence belongs to the CodY family.

The protein localises to the cytoplasm. DNA-binding global transcriptional regulator which is involved in the adaptive response to starvation and acts by directly or indirectly controlling the expression of numerous genes in response to nutrient availability. During rapid exponential growth, CodY is highly active and represses genes whose products allow adaptation to nutrient depletion. This is Global transcriptional regulator CodY from Staphylococcus epidermidis (strain ATCC 12228 / FDA PCI 1200).